The primary structure comprises 285 residues: Malonyl-[acyl-carrier protein] O-methyltransferase (285 aa).

The protein belongs to the methyltransferase superfamily.

It catalyses the reaction malonyl-[ACP] + S-adenosyl-L-methionine = malonyl-[ACP] methyl ester + S-adenosyl-L-homocysteine. It functions in the pathway cofactor biosynthesis; biotin biosynthesis. Its function is as follows. Converts the free carboxyl group of a malonyl-thioester to its methyl ester by transfer of a methyl group from S-adenosyl-L-methionine (SAM). It allows to synthesize pimeloyl-ACP via the fatty acid synthetic pathway. In Bacillus cytotoxicus (strain DSM 22905 / CIP 110041 / 391-98 / NVH 391-98), this protein is Malonyl-[acyl-carrier protein] O-methyltransferase.